We begin with the raw amino-acid sequence, 167 residues long: Large ribosomal subunit protein uL23 (167 aa).

Residues 1–118 are large ribosomal subunit protein uL23; that stretch reads MNVNEIIKGP…TEEKAKIAKK (118 aa). 2 disordered regions span residues 91-112 and 136-167; these read FEDESPQDQKDSETVSENTEEK and KQAELAKKDSETNENQEKRIENQTENQENSAN. Composition is skewed to basic and acidic residues over residues 97–112 and 136–157; these read QDQKDSETVSENTEEK and KQAELAKKDSETNENQEKRIEN. A unknown region spans residues 119 to 167; it reads KAELEAKNKEIAEKLAKKQAELAKKDSETNENQEKRIENQTENQENSAN. Residues 158–167 are compositionally biased toward polar residues; that stretch reads QTENQENSAN.

The protein belongs to the universal ribosomal protein uL23 family. Part of the 50S ribosomal subunit. Contacts protein L29, and trigger factor when it is bound to the ribosome.

Functionally, one of the early assembly proteins it binds 23S rRNA. One of the proteins that surrounds the polypeptide exit tunnel on the outside of the ribosome. Forms the main docking site for trigger factor binding to the ribosome. The polypeptide is Large ribosomal subunit protein uL23 (Mesomycoplasma hyopneumoniae (strain J / ATCC 25934 / NCTC 10110) (Mycoplasma hyopneumoniae)).